We begin with the raw amino-acid sequence, 223 residues long: Deoxyribose-phosphate aldolase (223 aa).

Aspartate 89 serves as the catalytic Proton donor/acceptor. The active-site Schiff-base intermediate with acetaldehyde is lysine 152. The active-site Proton donor/acceptor is lysine 181.

The protein belongs to the DeoC/FbaB aldolase family. DeoC type 1 subfamily.

It localises to the cytoplasm. It carries out the reaction 2-deoxy-D-ribose 5-phosphate = D-glyceraldehyde 3-phosphate + acetaldehyde. It functions in the pathway carbohydrate degradation; 2-deoxy-D-ribose 1-phosphate degradation; D-glyceraldehyde 3-phosphate and acetaldehyde from 2-deoxy-alpha-D-ribose 1-phosphate: step 2/2. Its function is as follows. Catalyzes a reversible aldol reaction between acetaldehyde and D-glyceraldehyde 3-phosphate to generate 2-deoxy-D-ribose 5-phosphate. The sequence is that of Deoxyribose-phosphate aldolase from Bacillus mycoides (strain KBAB4) (Bacillus weihenstephanensis).